Here is a 42-residue protein sequence, read N- to C-terminus: Crotamine-IV-2 (42 aa).

Cystine bridges form between Cys4–Cys37, Cys11–Cys31, and Cys19–Cys38.

Belongs to the crotamine-myotoxin family. Monomer. In terms of tissue distribution, expressed by the venom gland.

The protein localises to the secreted. Functionally, cationic peptide that possesses multiple functions. It acts as a cell-penetrating peptide (CPP), and as a potent voltage-gated potassium channel (Kv) inhibitor. It exhibits antimicrobial activities, and hind limb paralysis. It also induces potent blockade of neuromuscular transmission in young chicken biventer cervicis preparation and potent myotoxic effect. In vivo, induces myonecrosis, upon intramuscular or subcutaneous injections into mice. The sequence is that of Crotamine-IV-2 from Crotalus durissus cumanensis (South American rattlesnake).